The primary structure comprises 279 residues: Vitamin B12-binding protein (279 aa).

The N-terminal stretch at 1-20 (MTFRFLCWLTGLLLCTAAYA) is a signal peptide. Residues 24–276 (RVISLAPHAT…QLAELKLAPS (253 aa)) enclose the Fe/B12 periplasmic-binding domain. A disulfide bridge connects residues cysteine 189 and cysteine 265.

It belongs to the BtuF family. In terms of assembly, the complex is composed of two ATP-binding proteins (BtuD), two transmembrane proteins (BtuC) and a solute-binding protein (BtuF).

It localises to the periplasm. In terms of biological role, part of the ABC transporter complex BtuCDF involved in vitamin B12 import. Binds vitamin B12 and delivers it to the periplasmic surface of BtuC. This is Vitamin B12-binding protein from Pectobacterium atrosepticum (strain SCRI 1043 / ATCC BAA-672) (Erwinia carotovora subsp. atroseptica).